We begin with the raw amino-acid sequence, 37 residues long: MKIRASIRKICEKCRLIRRRRRIMVICCNSKHKQKQG.

It belongs to the bacterial ribosomal protein bL36 family.

It localises to the plastid. It is found in the chloroplast. The protein is Large ribosomal subunit protein bL36c of Adiantum capillus-veneris (Maidenhair fern).